Consider the following 329-residue polypeptide: N-acetyl-gamma-glutamyl-phosphate reductase (329 aa).

Residue Cys155 is part of the active site.

Belongs to the NAGSA dehydrogenase family. Type 1 subfamily.

Its subcellular location is the cytoplasm. The enzyme catalyses N-acetyl-L-glutamate 5-semialdehyde + phosphate + NADP(+) = N-acetyl-L-glutamyl 5-phosphate + NADPH + H(+). It functions in the pathway amino-acid biosynthesis; L-arginine biosynthesis; N(2)-acetyl-L-ornithine from L-glutamate: step 3/4. In terms of biological role, catalyzes the NADPH-dependent reduction of N-acetyl-5-glutamyl phosphate to yield N-acetyl-L-glutamate 5-semialdehyde. This is N-acetyl-gamma-glutamyl-phosphate reductase from Shewanella pealeana (strain ATCC 700345 / ANG-SQ1).